Consider the following 267-residue polypeptide: Geranylgeranylglyceryl phosphate synthase (267 aa).

Mg(2+) is bound by residues Asp23 and Ser52. Sn-glycerol 1-phosphate-binding positions include 173–179, 205–206, and 227–228; these read YLEAGSG, GG, and GT.

This sequence belongs to the GGGP/HepGP synthase family. Group II subfamily. It depends on Mg(2+) as a cofactor.

Its subcellular location is the cytoplasm. The enzyme catalyses sn-glycerol 1-phosphate + (2E,6E,10E)-geranylgeranyl diphosphate = sn-3-O-(geranylgeranyl)glycerol 1-phosphate + diphosphate. It participates in membrane lipid metabolism; glycerophospholipid metabolism. In terms of biological role, prenyltransferase that catalyzes the transfer of the geranylgeranyl moiety of geranylgeranyl diphosphate (GGPP) to the C3 hydroxyl of sn-glycerol-1-phosphate (G1P). This reaction is the first ether-bond-formation step in the biosynthesis of archaeal membrane lipids. The polypeptide is Geranylgeranylglyceryl phosphate synthase (Caldivirga maquilingensis (strain ATCC 700844 / DSM 13496 / JCM 10307 / IC-167)).